A 379-amino-acid polypeptide reads, in one-letter code: Transcription factor TIP2 (379 aa).

A disordered region spans residues 144–184 (MVGPFESSPTPRSGGGRKRSRATAGFHGGGPANGVEKKEKQ). The tract at residues 173 to 186 (GPANGVEKKEKQRR) is basic motif; degenerate. The region spanning 173 to 222 (GPANGVEKKEKQRRLRLTEKYNALMLLIPNRTKEDRATVISDAIEYIQEL) is the bHLH domain. Residues 187 to 222 (LRLTEKYNALMLLIPNRTKEDRATVISDAIEYIQEL) form a helix-loop-helix motif region.

Belongs to the bHLH protein family. As to quaternary structure, homodimer. Interacts with TDR, but not with EAT1. Highly expressed in anthers; strong expression in the middle layer and tapetum, and weak expression in the endothecium.

The protein localises to the nucleus. In terms of biological role, transcription factor that binds to the E-box-containing promoter regions of the transcription factors TDR and EAT1, activating their expression. May have a role in specifying the cell pattern of the inner anther walls and functioning in meiosis progression. Required for male reproduction. Acts downstream of UDT1 and GAMYB, but upstream of TDR1 and EAT1 in pollen development. This Oryza sativa subsp. japonica (Rice) protein is Transcription factor TIP2 (TIP2).